A 356-amino-acid chain; its full sequence is Alanine racemase (356 aa).

The Proton acceptor; specific for D-alanine role is filled by Lys35. Lys35 bears the N6-(pyridoxal phosphate)lysine mark. Substrate is bound at residue Arg130. Tyr253 acts as the Proton acceptor; specific for L-alanine in catalysis. Position 301 (Met301) interacts with substrate.

It belongs to the alanine racemase family. Pyridoxal 5'-phosphate is required as a cofactor.

It carries out the reaction L-alanine = D-alanine. Its pathway is amino-acid biosynthesis; D-alanine biosynthesis; D-alanine from L-alanine: step 1/1. In terms of biological role, catalyzes the interconversion of L-alanine and D-alanine. May also act on other amino acids. This chain is Alanine racemase (alr), found in Burkholderia mallei (strain NCTC 10229).